The primary structure comprises 95 residues: Integration host factor subunit beta (95 aa).

Residues 57 to 76 (APRTGRNPKTGDKVDLEGKY) form a disordered region. A compositionally biased stretch (basic and acidic residues) spans 65-76 (KTGDKVDLEGKY).

Belongs to the bacterial histone-like protein family. Heterodimer of an alpha and a beta chain.

Functionally, this protein is one of the two subunits of integration host factor, a specific DNA-binding protein that functions in genetic recombination as well as in transcriptional and translational control. The polypeptide is Integration host factor subunit beta (Enterobacter sp. (strain 638)).